The sequence spans 69 residues: MKQGIHPDYRETTVVCTCGNTFTTRSTSQSGTLNADVCSKCHPFYTGKQKILDAGGRVARFERRYGKKN.

4 residues coordinate Zn(2+): C16, C18, C38, and C41.

Belongs to the bacterial ribosomal protein bL31 family. Type A subfamily. As to quaternary structure, part of the 50S ribosomal subunit. It depends on Zn(2+) as a cofactor.

Functionally, binds the 23S rRNA. The polypeptide is Large ribosomal subunit protein bL31 (Cutibacterium acnes (strain DSM 16379 / KPA171202) (Propionibacterium acnes)).